Here is a 91-residue protein sequence, read N- to C-terminus: Small ribosomal subunit protein uS19 (91 aa).

The protein belongs to the universal ribosomal protein uS19 family.

Functionally, protein S19 forms a complex with S13 that binds strongly to the 16S ribosomal RNA. The protein is Small ribosomal subunit protein uS19 of Prochlorococcus marinus (strain MIT 9211).